The chain runs to 161 residues: Transcription elongation factor GreA (161 aa).

Positions Ala46 to Leu71 form a coiled coil.

The protein belongs to the GreA/GreB family.

Functionally, necessary for efficient RNA polymerase transcription elongation past template-encoded arresting sites. The arresting sites in DNA have the property of trapping a certain fraction of elongating RNA polymerases that pass through, resulting in locked ternary complexes. Cleavage of the nascent transcript by cleavage factors such as GreA or GreB allows the resumption of elongation from the new 3'terminus. GreA releases sequences of 2 to 3 nucleotides. The protein is Transcription elongation factor GreA of Syntrophus aciditrophicus (strain SB).